The chain runs to 219 residues: MSNHPYSPRDLILPDFTPNLRSVSDVHAWNGAATFLVMYGIWVLAGRSSLKLSKTDKWLMIWWAVSGLIHIIHEGYWLFSPEFYKDKSGNYFAEVWKEYCKGDSRYASRHSAVVGIEGIAVIIVGPASLFAVYAIAKGKSYSYILQLALALVQFYGSTLYFITAFLEGDNFAMDRDHYYKYFIAQGGTWLLFPALIIIRCWKKISAACEFQDQKKAKFY.

5 consecutive transmembrane segments (helical) span residues 26–46 (VHAWNGAATFLVMYGIWVLAG), 59–79 (LMIWWAVSGLIHIIHEGYWLF), 112–132 (AVVGIEGIAVIIVGPASLFAV), 144–164 (ILQLALALVQFYGSTLYFITA), and 178–198 (YYKYFIAQGGTWLLFPALIII). Residues 55-197 (TDKWLMIWWA…TWLLFPALII (143 aa)) form the EXPERA domain.

Belongs to the EBP family.

Its subcellular location is the membrane. The catalysed reaction is 7,8-epoxymelianol = protoglabretal. Its pathway is secondary metabolite biosynthesis; terpenoid biosynthesis. Its function is as follows. Isomerase involved in the biosynthesis of glabretanes triterpene natural products such as glabretal, a component with in vitro antiproliferative properties on lymphocytes. Catalyzes the conversion of 7,8-epoxymelianol to protoglabretal via skeletal rearrangements. The protein is Protoglabretal synthase ISM2 of Ailanthus altissima (Tree-of-heaven).